We begin with the raw amino-acid sequence, 215 residues long: Cytochrome b6 (215 aa).

The helical transmembrane segment at 32–52 threads the bilayer; it reads IFYCFGGIVFTCFLVQVATGF. C35 contacts heme c. Residues H86 and H100 each coordinate heme b. 3 helical membrane-spanning segments follow: residues 90–110, 116–136, and 186–206; these read ASMM…TGGF, LTWV…VTGY, and AHTF…FLMI. Heme b is bound by residues H187 and H202.

This sequence belongs to the cytochrome b family. PetB subfamily. As to quaternary structure, the 4 large subunits of the cytochrome b6-f complex are cytochrome b6, subunit IV (17 kDa polypeptide, PetD), cytochrome f and the Rieske protein, while the 4 small subunits are PetG, PetL, PetM and PetN. The complex functions as a dimer. Heme b is required as a cofactor. Heme c serves as cofactor.

It localises to the plastid. Its subcellular location is the chloroplast thylakoid membrane. Its function is as follows. Component of the cytochrome b6-f complex, which mediates electron transfer between photosystem II (PSII) and photosystem I (PSI), cyclic electron flow around PSI, and state transitions. In Skeletonema costatum (Marine centric diatom), this protein is Cytochrome b6.